The following is a 213-amino-acid chain: Thymidylate kinase (213 aa).

ATP is bound at residue 11-18; sequence GGEGAGKT.

It belongs to the thymidylate kinase family.

The enzyme catalyses dTMP + ATP = dTDP + ADP. Functionally, phosphorylation of dTMP to form dTDP in both de novo and salvage pathways of dTTP synthesis. In Shouchella clausii (strain KSM-K16) (Alkalihalobacillus clausii), this protein is Thymidylate kinase.